A 438-amino-acid chain; its full sequence is tRNA(Ile)-lysidine synthase (438 aa).

Ser27–Ser32 contributes to the ATP binding site.

This sequence belongs to the tRNA(Ile)-lysidine synthase family.

It localises to the cytoplasm. It carries out the reaction cytidine(34) in tRNA(Ile2) + L-lysine + ATP = lysidine(34) in tRNA(Ile2) + AMP + diphosphate + H(+). Its function is as follows. Ligates lysine onto the cytidine present at position 34 of the AUA codon-specific tRNA(Ile) that contains the anticodon CAU, in an ATP-dependent manner. Cytidine is converted to lysidine, thus changing the amino acid specificity of the tRNA from methionine to isoleucine. This chain is tRNA(Ile)-lysidine synthase, found in Vibrio parahaemolyticus serotype O3:K6 (strain RIMD 2210633).